Reading from the N-terminus, the 209-residue chain is Neurotrophin-4 (209 aa).

An N-terminal signal peptide occupies residues 1–21 (MLPRHSCSLLLFLLLLPSVPM). Residues 22-79 (EPQPPSSTLPPFLAPEWDLLSPRVALSRGTPAGPPLLFLLEAGAYGEPAGAPANRSRR) constitute a propeptide that is removed on maturation. N75 carries N-linked (GlcNAc...) asparagine glycosylation. Disulfide bonds link C96-C169, C140-C198, and C157-C200.

It belongs to the NGF-beta family. In terms of tissue distribution, expressed in thymus, muscle, ovary, brain, heart, stomach and kidney. Expressed in both embryo and adult tissues.

The protein localises to the secreted. Target-derived survival factor for peripheral sensory sympathetic neurons. May promote ameloblast differentiation and subsequent reduction in proliferation of ameloblasts. This chain is Neurotrophin-4 (Ntf4), found in Rattus norvegicus (Rat).